The primary structure comprises 289 residues: Xyloglucan endotransglucosylase/hydrolase protein 15 (289 aa).

Positions 1–25 are cleaved as a signal peptide; it reads MGPSSSLTTIVATVLLVTLFGSAYA. Positions 26–216 constitute a GH16 domain; sequence SNFFDEFDLT…WSKAPFTAYY (191 aa). The active-site Nucleophile is the Glu102. Glu106 serves as the catalytic Proton donor. Glu106 is a xyloglucan binding site. An N-linked (GlcNAc...) asparagine glycan is attached at Asn110. Xyloglucan is bound by residues 119–121, 129–131, 195–196, and Gly200; these read HTN, DRE, and DW. Cystine bridges form between Cys224-Cys230 and Cys270-Cys284. Arg275 is a xyloglucan binding site.

This sequence belongs to the glycosyl hydrolase 16 family. XTH group 2 subfamily. Contains at least one intrachain disulfide bond essential for its enzymatic activity. As to expression, strongly expressed in roots, hypocotyls and cotyledons. Aslo detected in inflorescence stems and in the carpels and styles in flowers.

Its subcellular location is the secreted. The protein resides in the cell wall. It is found in the extracellular space. It localises to the apoplast. It carries out the reaction breaks a beta-(1-&gt;4) bond in the backbone of a xyloglucan and transfers the xyloglucanyl segment on to O-4 of the non-reducing terminal glucose residue of an acceptor, which can be a xyloglucan or an oligosaccharide of xyloglucan.. It catalyses the reaction xyloglucan + H2O = xyloglucan oligosaccharides.. Catalyzes xyloglucan endohydrolysis (XEH) and/or endotransglycosylation (XET). Cleaves and religates xyloglucan polymers, an essential constituent of the primary cell wall, and thereby participates in cell wall construction of growing tissues. Has a high XET activity, but little or no XEH activity in vitro. Acceptor preferences are XXXGol &gt; XLLGol = XLFGol &gt; XXLGol &gt; XXFGol. The polypeptide is Xyloglucan endotransglucosylase/hydrolase protein 15 (Arabidopsis thaliana (Mouse-ear cress)).